The chain runs to 83 residues: U5-theraphotoxin-Hs1b 1 (83 aa).

The signal sequence occupies residues 1-21 (MKTSMFLTLTGLVLLFVVCYA). Positions 22 to 49 (SESEEKEFPKELLSSIFAADSDFKEEER) are excised as a propeptide. 3 disulfide bridges follow: Cys51-Cys63, Cys56-Cys68, and Cys62-Cys75.

This sequence belongs to the neurotoxin 10 (Hwtx-1) family. 51 (Hntx-8) subfamily. Hntx-8 sub-subfamily. In terms of tissue distribution, expressed by the venom gland.

It is found in the secreted. Its function is as follows. Weakly inhibits 5HT3A receptors and Kv1.3/KCNA3 voltage-gated potassium channels. Agglutinates erythrocytes. The polypeptide is U5-theraphotoxin-Hs1b 1 (Cyriopagopus schmidti (Chinese bird spider)).